We begin with the raw amino-acid sequence, 660 residues long: MKTVVFAYHDMGCLGIEALLAAGYEISAIFTHTDNPGEKAFYGSVARLAAERGIPVYAPDNVNHPLWVERIAQLSPEVIFSFYYRHLICDEILQLAPRGAFNLHGSLLPKYRGRAPLNWVLVNGETETGVTLHRMVKRADAGAIVAQLRVAIAPDDIAITLHHKLCHAARQLLEQTLPAIKHGNILEIAQRENEATCFGRRTPDDSFLEWHKSASVLHNMVRAVADPWPGAFSYVGNQKFTVWSSRVHPHASKAQPGSVISVAPLLIACGDGALEIVTGQAGDGITMQGSQLAQTLGLVQGSRLNSQPACAARRRTRVLILGVNGFIGNHLTERLLREDHYEVYGLDIGSDAISRFLNHPHFHFVEGDISIHSEWIEYHVKKCDVVLPLVAIATPIEYTRNPLRVFELDFEENLRIIRYCVKYRKRIIFPSTSEVYGMCSDKYFDEDHSNLIVGPVNKPRWIYSVSKQLLDRVIWAYGEKEGLQFTLFRPFNWMGPRLDNLNAARIGSSRAITQLILNLVEGSPIKLIDGGKQKRCFTDIRDGIEALYRIIENAGNRCDGEIINIGNPENEASIEELGEMLLASFEKHPLRHYFPPFAGFRVVESSSYYGKGYQDVEHRKPSIRNARRCLNWEPKIDMQETIDETLDFFLRTVDLTDKPS.

The formyltransferase ArnAFT stretch occupies residues 1–304 (MKTVVFAYHD…TLGLVQGSRL (304 aa)). 86-88 (HLI) is a binding site for (6R)-10-formyltetrahydrofolate. The active-site Proton donor; for formyltransferase activity is the histidine 104. Residues arginine 114 and 136-140 (VKRAD) contribute to the (6R)-10-formyltetrahydrofolate site. Residues 314–660 (RRTRVLILGV…RTVDLTDKPS (347 aa)) form a dehydrogenase ArnADH region. NAD(+) is bound by residues aspartate 347 and 368–369 (DI). UDP-alpha-D-glucuronate contacts are provided by residues alanine 393, tyrosine 398, and 432–433 (TS). The active-site Proton acceptor; for decarboxylase activity is the glutamate 434. Residues arginine 460, asparagine 492, 526–535 (KLIDGGKQKR), and tyrosine 613 contribute to the UDP-alpha-D-glucuronate site. Catalysis depends on arginine 619, which acts as the Proton donor; for decarboxylase activity.

This sequence in the N-terminal section; belongs to the Fmt family. UDP-L-Ara4N formyltransferase subfamily. The protein in the C-terminal section; belongs to the NAD(P)-dependent epimerase/dehydratase family. UDP-glucuronic acid decarboxylase subfamily. In terms of assembly, homohexamer, formed by a dimer of trimers.

The catalysed reaction is UDP-alpha-D-glucuronate + NAD(+) = UDP-beta-L-threo-pentopyranos-4-ulose + CO2 + NADH. It carries out the reaction UDP-4-amino-4-deoxy-beta-L-arabinose + (6R)-10-formyltetrahydrofolate = UDP-4-deoxy-4-formamido-beta-L-arabinose + (6S)-5,6,7,8-tetrahydrofolate + H(+). It functions in the pathway nucleotide-sugar biosynthesis; UDP-4-deoxy-4-formamido-beta-L-arabinose biosynthesis; UDP-4-deoxy-4-formamido-beta-L-arabinose from UDP-alpha-D-glucuronate: step 1/3. The protein operates within nucleotide-sugar biosynthesis; UDP-4-deoxy-4-formamido-beta-L-arabinose biosynthesis; UDP-4-deoxy-4-formamido-beta-L-arabinose from UDP-alpha-D-glucuronate: step 3/3. It participates in bacterial outer membrane biogenesis; lipopolysaccharide biosynthesis. Functionally, bifunctional enzyme that catalyzes the oxidative decarboxylation of UDP-glucuronic acid (UDP-GlcUA) to UDP-4-keto-arabinose (UDP-Ara4O) and the addition of a formyl group to UDP-4-amino-4-deoxy-L-arabinose (UDP-L-Ara4N) to form UDP-L-4-formamido-arabinose (UDP-L-Ara4FN). The modified arabinose is attached to lipid A and is required for resistance to polymyxin and cationic antimicrobial peptides. The protein is Bifunctional polymyxin resistance protein ArnA of Escherichia coli O1:K1 / APEC.